Reading from the N-terminus, the 246-residue chain is Probable fimbrial chaperone YadV (246 aa).

A signal peptide spans Met-1–Ala-25.

The protein belongs to the periplasmic pilus chaperone family.

Its subcellular location is the periplasm. In terms of biological role, part of the yadCKLM-htrE-yadVN fimbrial operon. Could contribute to adhesion to various surfaces in specific environmental niches. The protein is Probable fimbrial chaperone YadV (yadV) of Escherichia coli (strain K12).